Reading from the N-terminus, the 329-residue chain is MAKTPMRVAVTGAAGQICYSLLFRIANGDMLGKDQPVILQLLEIPNEKAQKALQGVMMEIDDCAFPLLAGMTAHADPMTAFKDADVALLVGARPRGPGMERKDLLEANAQIFTVQGKAIDAVASRNIKVLVVGNPANTNAYIAMKSAPSLPAKNFTAMLRLDHNRALSQIAAKTGKPVSSIEKLFVWGNHSPTMYADYRYAQIDGASVKDMINDDAWNRDTFLPTVGKRGAAIIDARGVSSAASAANAAIDHIHDWVLGTAGKWTTMGIPSDGSYGIPEGVIFGFPVTTENGEYKIVQGLSIDAFSQERINVTLNELLEEQNGVQHLLG.

Residue 12 to 18 (GAAGQIC) coordinates NAD(+). Arg-95 and Arg-101 together coordinate substrate. NAD(+)-binding positions include Asn-108, Gln-115, and 132–134 (VGN). 2 residues coordinate substrate: Asn-134 and Arg-165. The active-site Proton acceptor is His-190.

Belongs to the LDH/MDH superfamily. MDH type 2 family. As to quaternary structure, homodimer.

The catalysed reaction is (S)-malate + NAD(+) = oxaloacetate + NADH + H(+). In terms of biological role, catalyzes the reversible oxidation of malate to oxaloacetate. The protein is Malate dehydrogenase of Aquaspirillum arcticum.